The primary structure comprises 386 residues: RNA polymerase sigma factor SigA (386 aa).

The sigma-70 factor domain-2 stretch occupies residues 154-224; sequence LAEANLRLVV…TRAIADQART (71 aa). Residues 178-181 carry the Interaction with polymerase core subunit RpoC motif; it reads DLIQ. A sigma-70 factor domain-3 region spans residues 233 to 309; sequence ETINKLIRVQ…DDVIESPVDY (77 aa). Positions 322–375 are sigma-70 factor domain-4; that stretch reads VMDTLTDREENVLRMRFGLDDGRMHTLEDVGKQFKVTRERIRQIEAKAIKKLRH. Positions 348–367 form a DNA-binding region, H-T-H motif; sequence LEDVGKQFKVTRERIRQIEA.

Belongs to the sigma-70 factor family. RpoD/SigA subfamily. Interacts transiently with the RNA polymerase catalytic core.

It localises to the cytoplasm. Its function is as follows. Sigma factors are initiation factors that promote the attachment of RNA polymerase to specific initiation sites and are then released. This sigma factor is the primary sigma factor during exponential growth. This chain is RNA polymerase sigma factor SigA, found in Lactococcus lactis subsp. lactis (strain IL1403) (Streptococcus lactis).